Here is a 1033-residue protein sequence, read N- to C-terminus: E3 ubiquitin-protein ligase Topors (1033 aa).

The span at 1–10 shows a compositional bias: pro residues; sequence MGSQPPPPGS. Residues 1–36 form a disordered region; that stretch reads MGSQPPPPGSPLSREEGEAPPLVPAEEGRRRSRRVR. A required for DNA-binding region spans residues 52-376; that stretch reads ELASNGPAVP…MAAFDQHANY (325 aa). Residues Lys-74, Lys-77, Lys-84, and Lys-89 each participate in a glycyl lysine isopeptide (Lys-Gly) (interchain with G-Cter in SUMO2) cross-link. Ser-99 is modified (phosphoserine). The RING-type zinc-finger motif lies at 104–143; sequence CPICLDRFDNVSYLDRCLHKFCFRCVQEWSKNKAECPLCK. Residue Lys-160 forms a Glycyl lysine isopeptide (Lys-Gly) (interchain with G-Cter in SUMO2) linkage. Ser-196 carries the post-translational modification Phosphoserine. Residue Lys-251 forms a Glycyl lysine isopeptide (Lys-Gly) (interchain with G-Cter in SUMO2) linkage. Disordered stretches follow at residues 414 to 477 and 496 to 692; these read QAPW…SSSD and VELS…RYYL. Low complexity predominate over residues 434-444; the sequence is VGVSSLLNSSD. Residues 438–574 are sumoylation and localization to discrete nuclear foci; sequence SLLNSSDSSD…RSTSLPAPRD (137 aa). The segment at 438-654 is interaction with SUMO1; sequence SLLNSSDSSD…RSRTRDSSWS (217 aa). Residues 455 to 464 are compositionally biased toward polar residues; it reads TTSQIQGVQT. The interval 457–731 is interaction with p53/TP53; that stretch reads SQIQGVQTND…RRTLSRAHYS (275 aa). Positions 457–879 are interaction with TOP1; that stretch reads SQIQGVQTND…GKATDTSKHH (423 aa). Positions 465-477 are enriched in low complexity; that stretch reads NDDVNNDSDSSSD. The residue at position 500 (Ser-500) is a Phosphoserine. Over residues 507-518 the composition is skewed to basic and acidic residues; the sequence is PYEKVETVKTQE. Residues 522-535 are compositionally biased toward low complexity; it reads SYSSGDSDVSRASS. A compositionally biased stretch (basic and acidic residues) spans 540–566; it reads LGKDEQMSKSHCDSDTRISSKKEEKRS. Lys-561 participates in a covalent cross-link: Glycyl lysine isopeptide (Lys-Gly) (interchain with G-Cter in SUMO). Position 585 is a phosphoserine (Ser-585). 2 stretches are compositionally biased toward basic residues: residues 613-629 and 637-647; these read RNHR…KRSR and PRARKDKKRSR. The span at 654–669 shows a compositional bias: low complexity; that stretch reads SRRSQTLSLSSGSTSR. Lys-701 is covalently cross-linked (Glycyl lysine isopeptide (Lys-Gly) (interchain with G-Cter in SUMO2)). Disordered stretches follow at residues 713 to 934 and 970 to 1033; these read RDGY…PIQD and TVEN…CDVS. Ser-718 carries the post-translational modification Phosphoserine; by PLK1. Residues 721-730 are compositionally biased toward basic residues; it reads RRRTLSRAHY. The span at 731 to 747 shows a compositional bias: polar residues; it reads SRQSSSPEFRIQSFSER. Phosphoserine is present on Ser-734. The segment covering 770–780 has biased composition (low complexity); the sequence is SVSSNRSRTTS. The segment covering 815-837 has biased composition (basic and acidic residues); it reads FTSKGKDSHYQKSKLDGSYKNES. Glycyl lysine isopeptide (Lys-Gly) (interchain with G-Cter in SUMO2) cross-links involve residues Lys-818 and Lys-834. Over residues 851–860 the composition is skewed to basic residues; sequence KHKRRRRRTR. Positions 851–914 are interaction with UBE2I; the sequence is KHKRRRRRTR…ITIDSDSDGE (64 aa). Residues Ser-861 and Ser-863 each carry the phosphoserine modification. Over residues 877–894 the composition is skewed to basic residues; sequence KHHKKKKKKHKKKHKKHH. Phosphoserine is present on residues Ser-909, Ser-911, Ser-999, Ser-1016, and Ser-1025. A compositionally biased stretch (polar residues) spans 992–1008; sequence TFASDLESQSSNVSIQA.

Interacts with TOP1. Interacts with the SUMO1 conjugating enzyme UBE2I. Interacts with SUMO1. Interacts with NKX3-1; polyubiquitinates NKX3-1 and induces its proteasomal degradation. Interacts with SIN3A; sumoylates SIN3A. Interacts with IKBKE; induced by DNA damage. Interacts with p53/TP53. Interacts with PARK7/DJ-1. Post-translationally, phosphorylation at Ser-99 regulates the E3 ubiquitin-protein ligase activity but not the SUMO1-protein ligase activity. Phosphorylation at Ser-718 increases the E3 ubiquitin-protein ligase activity versus the E3 SUMO1-protein ligase activity resulting in increased p53/TP53 ubiquitination and degradation. Sumoylated.

Its subcellular location is the nucleus. It is found in the PML body. The catalysed reaction is S-ubiquitinyl-[E2 ubiquitin-conjugating enzyme]-L-cysteine + [acceptor protein]-L-lysine = [E2 ubiquitin-conjugating enzyme]-L-cysteine + N(6)-ubiquitinyl-[acceptor protein]-L-lysine.. In terms of biological role, functions as an E3 ubiquitin-protein ligase and as a E3 SUMO1-protein ligase. Probable tumor suppressor involved in cell growth, cell proliferation and apoptosis that regulates p53/TP53 stability through ubiquitin-dependent degradation. May regulate chromatin modification through sumoylation of several chromatin modification-associated proteins. May be involved in DNA-damage-induced cell death through IKBKE sumoylation. In Mus musculus (Mouse), this protein is E3 ubiquitin-protein ligase Topors (Topors).